Consider the following 174-residue polypeptide: UPF0316 protein LMOf2365_1801 (174 aa).

The next 3 helical transmembrane spans lie at Gly4–Val24, Leu36–Leu56, and Ile62–Ile82.

It belongs to the UPF0316 family.

Its subcellular location is the cell membrane. In Listeria monocytogenes serotype 4b (strain F2365), this protein is UPF0316 protein LMOf2365_1801.